The following is a 287-amino-acid chain: Energy-coupling factor transporter ATP-binding protein EcfA2 (287 aa).

An ABC transporter domain is found at 3–245 (IKFENVSYVY…SEWLQKHHLA (243 aa)). 40–47 (GHTGSGKS) serves as a coordination point for ATP.

This sequence belongs to the ABC transporter superfamily. Energy-coupling factor EcfA family. In terms of assembly, forms a stable energy-coupling factor (ECF) transporter complex composed of 2 membrane-embedded substrate-binding proteins (S component), 2 ATP-binding proteins (A component) and 2 transmembrane proteins (T component).

The protein resides in the cell membrane. In terms of biological role, ATP-binding (A) component of a common energy-coupling factor (ECF) ABC-transporter complex. Unlike classic ABC transporters this ECF transporter provides the energy necessary to transport a number of different substrates. The protein is Energy-coupling factor transporter ATP-binding protein EcfA2 of Lactobacillus delbrueckii subsp. bulgaricus (strain ATCC 11842 / DSM 20081 / BCRC 10696 / JCM 1002 / NBRC 13953 / NCIMB 11778 / NCTC 12712 / WDCM 00102 / Lb 14).